Consider the following 311-residue polypeptide: Transmembrane protein DDB_G0273707/DDB_G0273361 (311 aa).

Residues 1 to 113 are disordered; it reads MNEIEVDNLS…NNNNNKNENN (113 aa). Asn-8 carries an N-linked (GlcNAc...) asparagine glycan. The segment covering 9–18 has biased composition (polar residues); sequence LSHTNKNVAT. N-linked (GlcNAc...) asparagine glycans are attached at residues Asn-35, Asn-38, Asn-62, and Asn-76. Composition is skewed to low complexity over residues 37 to 67 and 76 to 111; these read SNNS…SNSN and NNSN…NKNE. Residues 95-124 are a coiled coil; the sequence is NNNNNNNNNNNNNNKNENNNKIKNEKINIL. 5 helical membrane-spanning segments follow: residues 150–170, 181–201, 208–228, 235–255, and 276–296; these read LEEI…LALL, IFLL…PKSP, LVLG…ALVY, VACA…KSIH, and FYYI…TALI.

The protein resides in the membrane. The sequence is that of Transmembrane protein DDB_G0273707/DDB_G0273361 from Dictyostelium discoideum (Social amoeba).